A 279-amino-acid chain; its full sequence is Thymidylate synthase (279 aa).

Residue 133–134 (RR) coordinates dUMP. The active-site Nucleophile is C154. DUMP-binding positions include 178–181 (RSND), N189, and 219–221 (HIY). D181 provides a ligand contact to (6R)-5,10-methylene-5,6,7,8-tetrahydrofolate. A278 lines the (6R)-5,10-methylene-5,6,7,8-tetrahydrofolate pocket.

Belongs to the thymidylate synthase family. Bacterial-type ThyA subfamily. Homodimer.

The protein localises to the cytoplasm. It catalyses the reaction dUMP + (6R)-5,10-methylene-5,6,7,8-tetrahydrofolate = 7,8-dihydrofolate + dTMP. The protein operates within pyrimidine metabolism; dTTP biosynthesis. In terms of biological role, catalyzes the reductive methylation of 2'-deoxyuridine-5'-monophosphate (dUMP) to 2'-deoxythymidine-5'-monophosphate (dTMP) while utilizing 5,10-methylenetetrahydrofolate (mTHF) as the methyl donor and reductant in the reaction, yielding dihydrofolate (DHF) as a by-product. This enzymatic reaction provides an intracellular de novo source of dTMP, an essential precursor for DNA biosynthesis. This is Thymidylate synthase from Streptococcus pyogenes serotype M12 (strain MGAS2096).